A 162-amino-acid chain; its full sequence is MSIILIGFMGAGKSTVAKLLAEEFTDLDKLIEEEIEMPIATFFELFGEADFRKIENEVFELAVQKDIIIATGGGIIENPKNLNVLDRASRVVFLTADFDTLWKRISMDWQNVRPLAQDKEAAQLLFEKRMKDYSLVADLTIDVTDKSPEQIAELIREKWEIE.

An ATP-binding site is contributed by 10-15 (GAGKST). Ser14 is a Mg(2+) binding site. Substrate-binding residues include Asp28, Arg52, and Gly73. Arg113 is a binding site for ATP. Residue Arg129 coordinates substrate.

This sequence belongs to the shikimate kinase family. As to quaternary structure, monomer. Mg(2+) serves as cofactor.

The protein localises to the cytoplasm. It catalyses the reaction shikimate + ATP = 3-phosphoshikimate + ADP + H(+). Its pathway is metabolic intermediate biosynthesis; chorismate biosynthesis; chorismate from D-erythrose 4-phosphate and phosphoenolpyruvate: step 5/7. In terms of biological role, catalyzes the specific phosphorylation of the 3-hydroxyl group of shikimic acid using ATP as a cosubstrate. The polypeptide is Shikimate kinase (Lactococcus lactis subsp. cremoris (strain SK11)).